The following is a 236-amino-acid chain: 2-C-methyl-D-erythritol 4-phosphate cytidylyltransferase (236 aa).

Belongs to the IspD/TarI cytidylyltransferase family. IspD subfamily.

It catalyses the reaction 2-C-methyl-D-erythritol 4-phosphate + CTP + H(+) = 4-CDP-2-C-methyl-D-erythritol + diphosphate. It functions in the pathway isoprenoid biosynthesis; isopentenyl diphosphate biosynthesis via DXP pathway; isopentenyl diphosphate from 1-deoxy-D-xylulose 5-phosphate: step 2/6. Catalyzes the formation of 4-diphosphocytidyl-2-C-methyl-D-erythritol from CTP and 2-C-methyl-D-erythritol 4-phosphate (MEP). In Burkholderia multivorans (strain ATCC 17616 / 249), this protein is 2-C-methyl-D-erythritol 4-phosphate cytidylyltransferase.